Reading from the N-terminus, the 145-residue chain is MKVTMALAALCVALQAPCIGSESTPSNLNNRHLRHEHDSNTPLQRRDEALVPAHRVYDPVSGLACSLVGKCMVCPTSEKDESYCRETGYRQELDCPRVEDDVVHTKSVNQRTTRFRPCSFAEPARPGVAFVKFEVGNLRTLLQKL.

A signal peptide spans 1-20; that stretch reads MKVTMALAALCVALQAPCIG. The RxLR motif lies at 31–34; sequence RHLR.

The protein belongs to the RxLR effector family.

The protein resides in the secreted. Its subcellular location is the host nucleus. It is found in the host cytoplasm. Its function is as follows. Secreted effector that completely suppresses the host cell death induced by cell death-inducing proteins. The protein is Secreted RxLR effector protein 43 of Plasmopara viticola (Downy mildew of grapevine).